The following is a 294-amino-acid chain: Metallophosphoesterase MPPED2 (294 aa).

Mn(2+)-binding residues include Asp65, His67, Asp86, Asn117, and His213. Residue Asn117–His118 coordinates GMP. GMP is bound by residues Lys225–Glu226 and Gly252–Glu255. His254 contributes to the Mn(2+) binding site.

It belongs to the UPF0046 family. Homodimer. The cofactor is Mn(2+). Requires Co(2+) as cofactor. As to expression, expressed predominantly in fetal brain.

Its activity is regulated as follows. Inhibited by nmolar levels of AMP and GMP. Displays low metallophosphoesterase activity (in vitro). May play a role in the development of the nervous system. The chain is Metallophosphoesterase MPPED2 (MPPED2) from Homo sapiens (Human).